We begin with the raw amino-acid sequence, 364 residues long: Aminomethyltransferase (364 aa).

The protein belongs to the GcvT family. The glycine cleavage system is composed of four proteins: P, T, L and H.

The catalysed reaction is N(6)-[(R)-S(8)-aminomethyldihydrolipoyl]-L-lysyl-[protein] + (6S)-5,6,7,8-tetrahydrofolate = N(6)-[(R)-dihydrolipoyl]-L-lysyl-[protein] + (6R)-5,10-methylene-5,6,7,8-tetrahydrofolate + NH4(+). Functionally, the glycine cleavage system catalyzes the degradation of glycine. This chain is Aminomethyltransferase, found in Shewanella woodyi (strain ATCC 51908 / MS32).